A 315-amino-acid chain; its full sequence is COMPASS component SWD3 (315 aa).

WD repeat units lie at residues 53 to 93, 94 to 133, 136 to 178, 187 to 228, 238 to 278, and 285 to 315; these read SHAR…HTFI, GHTA…LMKT, AHSE…KTLT, NGVV…RTFQ, HHSC…LLQL, and HHSS…WRWV.

As to quaternary structure, component of the Set1C/COMPASS complex which consists of SET1(2), BRE2(2), SPP1(2), SDC1(1), SHG1(1), SWD1(1), SWD2(1), and SWD3(1).

It localises to the nucleus. The protein resides in the chromosome. It is found in the telomere. Functionally, the COMPASS (Set1C) complex specifically mono-, di- and trimethylates histone H3 to form H3K4me1/2/3, which subsequently plays a role in telomere length maintenance and transcription elongation regulation. COMPASS recognizes ubiquitinated H2B on one face of the nucleosome which stimulates the methylation of H3 on the opposing face. SWD3/CPS30 establishes COMPASS trimethylation activity and may also serve as the anchor point to properly tether and space the other subunits. The polypeptide is COMPASS component SWD3 (Saccharomyces cerevisiae (strain ATCC 204508 / S288c) (Baker's yeast)).